The chain runs to 441 residues: Trigger factor (441 aa).

Positions 175-257 (GDFISLSLHV…VNAVIEVVAP (83 aa)) constitute a PPIase FKBP-type domain.

Belongs to the FKBP-type PPIase family. Tig subfamily.

The protein localises to the cytoplasm. The catalysed reaction is [protein]-peptidylproline (omega=180) = [protein]-peptidylproline (omega=0). In terms of biological role, involved in protein export. Acts as a chaperone by maintaining the newly synthesized protein in an open conformation. Functions as a peptidyl-prolyl cis-trans isomerase. This Chlamydia abortus (strain DSM 27085 / S26/3) (Chlamydophila abortus) protein is Trigger factor.